We begin with the raw amino-acid sequence, 264 residues long: 3-methyl-2-oxobutanoate hydroxymethyltransferase (264 aa).

Residues Asp-45 and Asp-84 each coordinate Mg(2+). Residues 45–46, Asp-84, and Lys-112 each bind 3-methyl-2-oxobutanoate; that span reads DS. Residue Glu-114 coordinates Mg(2+). The active-site Proton acceptor is the Glu-181.

It belongs to the PanB family. In terms of assembly, homodecamer; pentamer of dimers. Mg(2+) is required as a cofactor.

The protein localises to the cytoplasm. The catalysed reaction is 3-methyl-2-oxobutanoate + (6R)-5,10-methylene-5,6,7,8-tetrahydrofolate + H2O = 2-dehydropantoate + (6S)-5,6,7,8-tetrahydrofolate. It functions in the pathway cofactor biosynthesis; (R)-pantothenate biosynthesis; (R)-pantoate from 3-methyl-2-oxobutanoate: step 1/2. Functionally, catalyzes the reversible reaction in which hydroxymethyl group from 5,10-methylenetetrahydrofolate is transferred onto alpha-ketoisovalerate to form ketopantoate. The chain is 3-methyl-2-oxobutanoate hydroxymethyltransferase from Escherichia fergusonii (strain ATCC 35469 / DSM 13698 / CCUG 18766 / IAM 14443 / JCM 21226 / LMG 7866 / NBRC 102419 / NCTC 12128 / CDC 0568-73).